The chain runs to 404 residues: Dual-specificity RNA methyltransferase RlmN (404 aa).

Glutamate 119 functions as the Proton acceptor in the catalytic mechanism. One can recognise a Radical SAM core domain in the interval 126-358 (VGRAGALCVS…NKAGYSSPIR (233 aa)). Cysteine 133 and cysteine 369 are joined by a disulfide. [4Fe-4S] cluster-binding residues include cysteine 140, cysteine 144, and cysteine 147. Residues 195–196 (GE), serine 227, 249–251 (SLH), and asparagine 326 each bind S-adenosyl-L-methionine. The active-site S-methylcysteine intermediate is the cysteine 369.

This sequence belongs to the radical SAM superfamily. RlmN family. [4Fe-4S] cluster serves as cofactor.

It localises to the cytoplasm. The enzyme catalyses adenosine(2503) in 23S rRNA + 2 reduced [2Fe-2S]-[ferredoxin] + 2 S-adenosyl-L-methionine = 2-methyladenosine(2503) in 23S rRNA + 5'-deoxyadenosine + L-methionine + 2 oxidized [2Fe-2S]-[ferredoxin] + S-adenosyl-L-homocysteine. The catalysed reaction is adenosine(37) in tRNA + 2 reduced [2Fe-2S]-[ferredoxin] + 2 S-adenosyl-L-methionine = 2-methyladenosine(37) in tRNA + 5'-deoxyadenosine + L-methionine + 2 oxidized [2Fe-2S]-[ferredoxin] + S-adenosyl-L-homocysteine. In terms of biological role, specifically methylates position 2 of adenine 2503 in 23S rRNA and position 2 of adenine 37 in tRNAs. m2A2503 modification seems to play a crucial role in the proofreading step occurring at the peptidyl transferase center and thus would serve to optimize ribosomal fidelity. This chain is Dual-specificity RNA methyltransferase RlmN, found in Caulobacter sp. (strain K31).